A 244-amino-acid chain; its full sequence is 5-oxoprolinase subunit A (244 aa).

Belongs to the LamB/PxpA family. As to quaternary structure, forms a complex composed of PxpA, PxpB and PxpC.

The enzyme catalyses 5-oxo-L-proline + ATP + 2 H2O = L-glutamate + ADP + phosphate + H(+). Functionally, catalyzes the cleavage of 5-oxoproline to form L-glutamate coupled to the hydrolysis of ATP to ADP and inorganic phosphate. This Escherichia coli (strain K12) protein is 5-oxoprolinase subunit A.